Reading from the N-terminus, the 294-residue chain is UPF0761 membrane protein MADE_1017605/MADE_1018330 (294 aa).

6 helical membrane passes run 45 to 65, 99 to 119, 141 to 161, 182 to 202, 213 to 233, and 247 to 267; these read LLSL…FPAF, ASQM…MLIS, FAIY…SVVV, FLLS…LYMV, AFVG…GFAL, and ALAV…IVLF.

This sequence belongs to the UPF0761 family.

It localises to the cell inner membrane. The polypeptide is UPF0761 membrane protein MADE_1017605/MADE_1018330 (Alteromonas mediterranea (strain DSM 17117 / CIP 110805 / LMG 28347 / Deep ecotype)).